Consider the following 271-residue polypeptide: Regulatory protein RecX (271 aa).

The protein belongs to the RecX family.

The protein localises to the cytoplasm. Modulates RecA activity. The polypeptide is Regulatory protein RecX (Lactobacillus johnsonii (strain CNCM I-12250 / La1 / NCC 533)).